The following is a 299-amino-acid chain: Non-structural protein V (299 aa).

Residues 40-94 (SDNPGQDRATCKEEEAGSSGLSKPCLSAIGSTEGGAPRIRGQGSGESDDDAETLG) are disordered. The interval 110 to 120 (YHVYDHSGEAV) is interaction with host STAT1. Residues 133–143 (SGLDGDSTLSG) are compositionally biased toward low complexity. 2 disordered regions span residues 133-168 (SGLDGDSTLSGGDDESENSDVDIGEPDTEGYAITDR) and 204-229 (PKLGKTLNVPPPPNPSRASTSETPIK). Acidic residues predominate over residues 144–160 (GDDESENSDVDIGEPDT). Positions 232, 251, 255, 267, 269, 272, 276, and 279 each coordinate Zn(2+).

The protein belongs to the paramyxoviruses V protein family. As to quaternary structure, interacts with host IFIH1/MDA5 and DHX58/LGP2; these interactions are involved in the inhibition of the host type I interferon signaling pathway. Interacts with host TYK2; this interaction inhibits the type I interferon signaling pathway without affecting the type II pathway. Interacts with host IRF7; this interaction inhibits IRF7 translocation to the nucleus. Interacts with host CHUK. Interacts with host RELA/p65; this interaction inhibits the nuclear translocation of NF-KappaB. Interacts (via N-terminus) with host STAT1 and JAK1; these interactions inhibit STAT1 phosphorylation by Jak1 and thereby the type I interferon signaling pathway. Interacts (via C-terminus) with host STAT2; this interaction is involved in the inhibition of the host type I interferon signaling pathway. Forms a complex with host PPP1CA and PPP1CC; this interaction prevents dephosphorylation of host IFIH1/MDA5 and leads to the inhibition of the host type I interferon signaling pathway. Interacts with host IRF9; this interaction prevents the binding of IRF9 to STAT2 and thereby the type I interferon signaling pathway. Interacts with host RIGI regulatory protein (via CARDs domain) and host TRIM25 (via SPRY domain); these interactions prevent TRIM25-mediated ubiquitination of RIG-I and disrupts downstream RIG-I signaling.

It localises to the host cytoplasm. Its function is as follows. Plays an essential role in the inhibition of host immune response. Prevents the establishment of cellular antiviral state by blocking interferon-alpha/beta (IFN-alpha/beta) production and signaling pathway. Interacts with host IFIH1/MDA5 and DHX58/LGP2 to inhibit the transduction pathway involved in the activation of IFN-beta promoter, thus protecting the virus against cell antiviral state. Blocks the type I interferon signaling pathway by interacting with host TYK2 and thereby inhibiting downstream STAT1 and STAT2 phosphorylation. Blocks the type I interferon signaling pathway by disrupting the RIG-I signaling pathway. Moderately affects the type II interferon signaling. Prevents PP1alpha/gamma-mediated dephosphorylation of host IFIH1/MDA5 and thus blocks its activation. The protein is Non-structural protein V (P/V) of Homo sapiens (Human).